The primary structure comprises 512 residues: Intermediate filament family orphan 2 (512 aa).

In terms of domain architecture, IF rod spans 50-479 (NIHLLKGLNV…RLIKGSADRN (430 aa)). The interval 473 to 512 (KGSADRNSPSPSSVASSDSGSTDEIQEDLEREADVEPMVS) is disordered. Over residues 480 to 492 (SPSPSSVASSDSG) the composition is skewed to low complexity. Residues 496–512 (EIQEDLEREADVEPMVS) are compositionally biased toward acidic residues.

The protein belongs to the intermediate filament family.

The protein is Intermediate filament family orphan 2 (Iffo2) of Mus musculus (Mouse).